A 324-amino-acid chain; its full sequence is MRVTVLGAGAFGTALSVALYNSCCSVALWSRNKRVLEELRNTGMNSLYLPGCLVPKEIELIPDVESALKCASVLLLCVPTQELRNLCNDVRNTAALDASVPVLVCSKGIENKSLKFAGEVIEELLPDNPVFVLSGPALAKEMVRGLPCAMVLAGRDESLAASLAEKLSSAVMSIAPSTDYVGVQIGSVLKNIIAIACGIVIGKGLGYNASAMVVVRGIAEIQAVSTAKSESVDLSTIIGLACLGDLVLTCTSASSRNMSFGLAIGKGQDIASRNDSLVEGAESAQSIDRLSNTLGIHLPVCSAIAKLLRGELDTDQVINQLLFA.

3 residues coordinate NADPH: Phe-11, Arg-31, and Lys-107. Sn-glycerol 3-phosphate is bound by residues Lys-107 and Gly-135. Ala-139 is a binding site for NADPH. The sn-glycerol 3-phosphate site is built by Lys-190, Asp-245, Ser-255, Arg-256, and Asn-257. The active-site Proton acceptor is the Lys-190. An NADPH-binding site is contributed by Arg-256. 2 residues coordinate NADPH: Val-278 and Glu-279.

Belongs to the NAD-dependent glycerol-3-phosphate dehydrogenase family.

The protein resides in the cytoplasm. It catalyses the reaction sn-glycerol 3-phosphate + NAD(+) = dihydroxyacetone phosphate + NADH + H(+). It carries out the reaction sn-glycerol 3-phosphate + NADP(+) = dihydroxyacetone phosphate + NADPH + H(+). The protein operates within membrane lipid metabolism; glycerophospholipid metabolism. Its function is as follows. Catalyzes the reduction of the glycolytic intermediate dihydroxyacetone phosphate (DHAP) to sn-glycerol 3-phosphate (G3P), the key precursor for phospholipid synthesis. In Anaplasma phagocytophilum (strain HZ), this protein is Glycerol-3-phosphate dehydrogenase [NAD(P)+].